Reading from the N-terminus, the 80-residue chain is Ataxin-8 (80 aa).

Specifically found in brains from SCA8 patients (at protein level).

It localises to the nucleus. The chain is Ataxin-8 (ATXN8) from Homo sapiens (Human).